The following is a 21-amino-acid chain: Nigrocin-2GRb (21 aa).

In terms of tissue distribution, expressed by the skin glands.

It localises to the secreted. Its function is as follows. Antimicrobial peptide active against the Gram-positive bacterium S.aureus (MIC=12.5 uM) and against the Gram-negative bacteria E.coli (MIC=3 uM). Has antifungal activity against C.albicans (MIC=50 uM). Has some hemolytic activity against human erythrocytes (LC(50)=40 uM). The protein is Nigrocin-2GRb of Odorrana grahami (Yunnanfu frog).